A 271-amino-acid polypeptide reads, in one-letter code: Formamidopyrimidine-DNA glycosylase (271 aa).

P2 acts as the Schiff-base intermediate with DNA in catalysis. The active-site Proton donor is the E3. K56 serves as the catalytic Proton donor; for beta-elimination activity. H89, R107, and R151 together coordinate DNA. The FPG-type zinc finger occupies 236 to 270 (MVYDRAGLPCRVCAAPIKSIRQGQRSSFYCATCQK). Residue R260 is the Proton donor; for delta-elimination activity of the active site.

The protein belongs to the FPG family. Monomer. Zn(2+) serves as cofactor.

It catalyses the reaction Hydrolysis of DNA containing ring-opened 7-methylguanine residues, releasing 2,6-diamino-4-hydroxy-5-(N-methyl)formamidopyrimidine.. The enzyme catalyses 2'-deoxyribonucleotide-(2'-deoxyribose 5'-phosphate)-2'-deoxyribonucleotide-DNA = a 3'-end 2'-deoxyribonucleotide-(2,3-dehydro-2,3-deoxyribose 5'-phosphate)-DNA + a 5'-end 5'-phospho-2'-deoxyribonucleoside-DNA + H(+). In terms of biological role, involved in base excision repair of DNA damaged by oxidation or by mutagenic agents. Acts as a DNA glycosylase that recognizes and removes damaged bases. Has a preference for oxidized purines, such as 7,8-dihydro-8-oxoguanine (8-oxoG). Has AP (apurinic/apyrimidinic) lyase activity and introduces nicks in the DNA strand. Cleaves the DNA backbone by beta-delta elimination to generate a single-strand break at the site of the removed base with both 3'- and 5'-phosphates. This chain is Formamidopyrimidine-DNA glycosylase, found in Polaromonas naphthalenivorans (strain CJ2).